The sequence spans 718 residues: Fatty acid oxidation complex subunit alpha (718 aa).

The enoyl-CoA hydratase/isomerase stretch occupies residues 1 to 188 (MIYQGESIRV…KVGAVDAVVE (188 aa)). Aspartate 295 is a binding site for substrate. Residues 310-718 (TKEIKTAGVL…KSYFDTTSAK (409 aa)) are 3-hydroxyacyl-CoA dehydrogenase. Residues methionine 324, aspartate 343, 400-402 (VVE), lysine 407, and serine 429 contribute to the NAD(+) site. The For 3-hydroxyacyl-CoA dehydrogenase activity role is filled by histidine 450. An NAD(+)-binding site is contributed by asparagine 453. 2 residues coordinate substrate: asparagine 500 and tyrosine 658.

In the N-terminal section; belongs to the enoyl-CoA hydratase/isomerase family. This sequence in the C-terminal section; belongs to the 3-hydroxyacyl-CoA dehydrogenase family. In terms of assembly, heterotetramer of two alpha chains (FadB) and two beta chains (FadA).

It carries out the reaction a (3S)-3-hydroxyacyl-CoA + NAD(+) = a 3-oxoacyl-CoA + NADH + H(+). The catalysed reaction is a (3S)-3-hydroxyacyl-CoA = a (2E)-enoyl-CoA + H2O. It catalyses the reaction a 4-saturated-(3S)-3-hydroxyacyl-CoA = a (3E)-enoyl-CoA + H2O. The enzyme catalyses (3S)-3-hydroxybutanoyl-CoA = (3R)-3-hydroxybutanoyl-CoA. It carries out the reaction a (3Z)-enoyl-CoA = a 4-saturated (2E)-enoyl-CoA. The catalysed reaction is a (3E)-enoyl-CoA = a 4-saturated (2E)-enoyl-CoA. It functions in the pathway lipid metabolism; fatty acid beta-oxidation. Functionally, involved in the aerobic and anaerobic degradation of long-chain fatty acids via beta-oxidation cycle. Catalyzes the formation of 3-oxoacyl-CoA from enoyl-CoA via L-3-hydroxyacyl-CoA. It can also use D-3-hydroxyacyl-CoA and cis-3-enoyl-CoA as substrate. The sequence is that of Fatty acid oxidation complex subunit alpha from Idiomarina loihiensis (strain ATCC BAA-735 / DSM 15497 / L2-TR).